The chain runs to 314 residues: MKLKNTLLASALLSAMAFSVNAATELTPEQAAAVKPFDRVVVTGRFNAIGEAVKAVSRRADKEGAASFYVVDTSDFGNSGNWRVVADLYKADAEKAEETSNRVINGVVELPKDQAVLIEPFDTVTVQGFYRSQPEVNDAITKAAKAKGAYSFYIVRQIDANQGGNQRITAFIYKKDAKKRIVQSPDVIPADSEAGRAALAAGGEAAKKVEIPGVATTASPSSEVGRFFETQSSKGGRYTVTLPDGTKVEELNKATAAMMVPFDSIKFSGNYGNMTEVSYQVAKRAAKKGAKYYHITRQWQERGNNLTVSADLYK.

Positions 1-19 (MKLKNTLLASALLSAMAFS) are cleaved as a signal peptide.

It to E.coli YjfY.

This chain is Protein YdgH (ydgH), found in Escherichia coli (strain K12).